A 203-amino-acid chain; its full sequence is Large ribosomal subunit protein bL25 (203 aa).

The protein belongs to the bacterial ribosomal protein bL25 family. CTC subfamily. As to quaternary structure, part of the 50S ribosomal subunit; part of the 5S rRNA/L5/L18/L25 subcomplex. Contacts the 5S rRNA. Binds to the 5S rRNA independently of L5 and L18.

In terms of biological role, this is one of the proteins that binds to the 5S RNA in the ribosome where it forms part of the central protuberance. The sequence is that of Large ribosomal subunit protein bL25 from Rickettsia conorii (strain ATCC VR-613 / Malish 7).